The following is a 493-amino-acid chain: Probable polyol transporter 6 (493 aa).

Transmembrane regions (helical) follow at residues 25 to 45, 54 to 74, 85 to 105, 116 to 136, 142 to 162, 177 to 197, 275 to 295, 313 to 333, 343 to 363, 372 to 392, 414 to 434, and 444 to 464; these read SIVSIIFGYDTGVMSGAMVFI, VQIEVLTGILNLCALVGSLLA, YTIVLASILFMLGSILMGWGP, TAGLGVGFALMVAPVYSAEIA, GLLASLPHLCISIGILLGYIV, LMLGIAAVPSLVLAFGILKMP, VLLTALGIHFFQHASGIEAVL, LFLVTIGVGIMKTTFIFTATL, LLLTSVGGMVIALTMLGFGLT, LAWALVLSIVAAYSFVAFFSI, GASLGVAVNRVMNATVSMSFL, and GAFFMFAGVAAVAWNFFFFLL.

Belongs to the major facilitator superfamily. Sugar transporter (TC 2.A.1.1) family.

Its subcellular location is the membrane. Its function is as follows. Plasma membrane sugar-proton symporter. This chain is Probable polyol transporter 6 (PLT6), found in Arabidopsis thaliana (Mouse-ear cress).